The sequence spans 206 residues: Phosphoribosyl-dephospho-CoA transferase (206 aa).

Residues aspartate 131 and aspartate 133 contribute to the active site.

This sequence belongs to the MdcG family.

The catalysed reaction is apo-[malonate decarboxylase ACP] + 2'-(5''-triphospho-alpha-D-ribosyl)-3'-dephospho-CoA = holo-[malonate decarboxylase ACP] + diphosphate. Functionally, transfers 2'-(5-triphosphoribosyl)-3'-dephosphocoenzyme-A to the apo-[acyl-carrier-protein] of the malonate decarboxylase to yield holo-[acyl-carrier-protein]. This Pseudomonas fluorescens (strain Pf0-1) protein is Phosphoribosyl-dephospho-CoA transferase.